We begin with the raw amino-acid sequence, 119 residues long: Hemerythrin subunit B (119 aa).

H26, H55, E59, H74, H78, H107, and D112 together coordinate Fe cation.

This sequence belongs to the hemerythrin family.

Hemerythrin is a respiratory protein in blood cells of certain marine worms. The oxygen-binding site in each chain contains two iron atoms. The sequence is that of Hemerythrin subunit B from Sipunculus nudus (Sipunculan worm).